The following is a 500-amino-acid chain: Palmitoleoyl-protein carboxylesterase notum1a (500 aa).

A signal peptide spans 1-26 (MKRSLWVMQVLHWAVMLALVQCGALG). N-linked (GlcNAc...) asparagine glycosylation occurs at asparagine 101. Residues serine 237, aspartate 344, and histidine 393 each act as charge relay system in the active site.

Belongs to the pectinacetylesterase family. Notum subfamily.

Its subcellular location is the secreted. It carries out the reaction [Wnt protein]-O-(9Z)-hexadecenoyl-L-serine + H2O = [Wnt protein]-L-serine + (9Z)-hexadecenoate + H(+). Carboxylesterase that acts as a key negative regulator of the Wnt signaling pathway. Acts by specifically mediating depalmitoleoylation of WNT proteins. Serine palmitoleoylation of WNT proteins is required for efficient binding to frizzled receptors. The polypeptide is Palmitoleoyl-protein carboxylesterase notum1a (Danio rerio (Zebrafish)).